The following is a 316-amino-acid chain: Ribose-phosphate pyrophosphokinase (316 aa).

Residues 37–39 and 96–97 each bind ATP; these read DGE and RQ. Mg(2+) is bound by residues histidine 130 and aspartate 171. Lysine 194 is a catalytic residue. The D-ribose 5-phosphate site is built by arginine 196 and aspartate 221.

Belongs to the ribose-phosphate pyrophosphokinase family. Class I subfamily. In terms of assembly, homohexamer. Mg(2+) is required as a cofactor.

It localises to the cytoplasm. It catalyses the reaction D-ribose 5-phosphate + ATP = 5-phospho-alpha-D-ribose 1-diphosphate + AMP + H(+). Its pathway is metabolic intermediate biosynthesis; 5-phospho-alpha-D-ribose 1-diphosphate biosynthesis; 5-phospho-alpha-D-ribose 1-diphosphate from D-ribose 5-phosphate (route I): step 1/1. Its function is as follows. Involved in the biosynthesis of the central metabolite phospho-alpha-D-ribosyl-1-pyrophosphate (PRPP) via the transfer of pyrophosphoryl group from ATP to 1-hydroxyl of ribose-5-phosphate (Rib-5-P). The polypeptide is Ribose-phosphate pyrophosphokinase (Rhodopirellula baltica (strain DSM 10527 / NCIMB 13988 / SH1)).